The primary structure comprises 247 residues: Large ribosomal subunit protein uL3 (247 aa).

2 disordered regions span residues 124–145 (RLGQ…PGSM) and 218–247 (VGQE…ASAE). A compositionally biased stretch (basic and acidic residues) spans 222–241 (VKAEAKDTASTEKKQAETKN).

It belongs to the universal ribosomal protein uL3 family. Part of the 50S ribosomal subunit. Forms a cluster with proteins L14 and L19.

One of the primary rRNA binding proteins, it binds directly near the 3'-end of the 23S rRNA, where it nucleates assembly of the 50S subunit. In Oenococcus oeni (strain ATCC BAA-331 / PSU-1), this protein is Large ribosomal subunit protein uL3.